Here is a 553-residue protein sequence, read N- to C-terminus: Phosphomethylpyrimidine synthase (553 aa).

Substrate contacts are provided by residues Asn-192, Met-221, Tyr-250, His-286, 306 to 308 (SRG), 347 to 350 (DGLR), and Glu-386. His-390 contributes to the Zn(2+) binding site. Tyr-413 provides a ligand contact to substrate. His-454 is a Zn(2+) binding site. 3 residues coordinate [4Fe-4S] cluster: Cys-534, Cys-537, and Cys-542.

This sequence belongs to the ThiC family. In terms of assembly, homodimer. [4Fe-4S] cluster is required as a cofactor.

The enzyme catalyses 5-amino-1-(5-phospho-beta-D-ribosyl)imidazole + S-adenosyl-L-methionine = 4-amino-2-methyl-5-(phosphooxymethyl)pyrimidine + CO + 5'-deoxyadenosine + formate + L-methionine + 3 H(+). It participates in cofactor biosynthesis; thiamine diphosphate biosynthesis. Its function is as follows. Catalyzes the synthesis of the hydroxymethylpyrimidine phosphate (HMP-P) moiety of thiamine from aminoimidazole ribotide (AIR) in a radical S-adenosyl-L-methionine (SAM)-dependent reaction. The polypeptide is Phosphomethylpyrimidine synthase (Anaplasma marginale (strain St. Maries)).